The chain runs to 254 residues: MSSQPPPLPWLDPNQDFPPTSQAWDENSPAPGLLAAGGVLDVETLRRAYSQGIFPWYSEGQPTLWWSPNPRMVLQVANFRLRPSFKKKIRQFCQTPGCEIRIDSAFEQVIEACASSARIGQSGTWIVPDMRAAYGELHRVGLAHSVETWVNGELAGGLYCVALGKAVFGESMFSRVSDASKIALAALIGFCRHHGVKQIDCQQNTPHLASLGAGEISRDLFLKGLAAGLAEAGPAWEFDRRFWQQLLTPESMST.

Residues 1–10 (MSSQPPPLPW) show a composition bias toward pro residues. The segment at 1–28 (MSSQPPPLPWLDPNQDFPPTSQAWDENS) is disordered.

The protein belongs to the L/F-transferase family.

The protein localises to the cytoplasm. It catalyses the reaction N-terminal L-lysyl-[protein] + L-leucyl-tRNA(Leu) = N-terminal L-leucyl-L-lysyl-[protein] + tRNA(Leu) + H(+). The catalysed reaction is N-terminal L-arginyl-[protein] + L-leucyl-tRNA(Leu) = N-terminal L-leucyl-L-arginyl-[protein] + tRNA(Leu) + H(+). It carries out the reaction L-phenylalanyl-tRNA(Phe) + an N-terminal L-alpha-aminoacyl-[protein] = an N-terminal L-phenylalanyl-L-alpha-aminoacyl-[protein] + tRNA(Phe). Functions in the N-end rule pathway of protein degradation where it conjugates Leu, Phe and, less efficiently, Met from aminoacyl-tRNAs to the N-termini of proteins containing an N-terminal arginine or lysine. This Albidiferax ferrireducens (strain ATCC BAA-621 / DSM 15236 / T118) (Rhodoferax ferrireducens) protein is Leucyl/phenylalanyl-tRNA--protein transferase.